The sequence spans 117 residues: Large ribosomal subunit protein eL34 (117 aa).

Position 12 is a phosphoserine (Ser12). Lys36 and Lys43 each carry N6-acetyllysine. Lys108 is covalently cross-linked (Glycyl lysine isopeptide (Lys-Gly) (interchain with G-Cter in SUMO2)).

This sequence belongs to the eukaryotic ribosomal protein eL34 family. As to quaternary structure, component of the large ribosomal subunit.

It is found in the cytoplasm. Its subcellular location is the cytosol. The protein localises to the endoplasmic reticulum. In terms of biological role, component of the large ribosomal subunit. The ribosome is a large ribonucleoprotein complex responsible for the synthesis of proteins in the cell. In Sus scrofa (Pig), this protein is Large ribosomal subunit protein eL34 (RPL34).